The primary structure comprises 494 residues: SNF1-related protein kinase catalytic subunit alpha KIN12 (494 aa).

Residues 19-270 (YRIGKTLGHG…ITEIRQHPWF (252 aa)) form the Protein kinase domain. ATP is bound by residues 25–33 (LGHGSFAKV) and Lys48. The active-site Proton acceptor is Asp142. Thr175 is subject to Phosphothreonine. The tract at residues 289–386 (AKKIEEEIIQ…GLKSNVKDDK (98 aa)) is auto-inhibitory domain (AID). Residues 291-331 (KIEEEIIQNVVNIGFDRNHVVDSLANRIQNEATVAYHLILD) enclose the UBA domain. Positions 293 to 494 (EEEIIQNVVN…VAFLRELGVL (202 aa)) are regulatory domain (RD). A PPI region spans residues 387-494 (TWTLGLQSQG…VAFLRELGVL (108 aa)). The KA1 domain maps to 445–493 (AIILPTVIKFEIQLYKVREGKYLLDILRIDGPQFIFFDLCVAFLRELGV).

This sequence belongs to the protein kinase superfamily. CAMK Ser/Thr protein kinase family. SNF1 subfamily. Subunit of a probable heterotrimeric complex consisting of an alpha catalytic subunit, and a beta (KINB) and a gamma (KING or SNF4) non-catalytic regulatory subunits. Post-translationally, autophosphorylated. Expressed at very low levels.

The enzyme catalyses L-seryl-[protein] + ATP = O-phospho-L-seryl-[protein] + ADP + H(+). The catalysed reaction is L-threonyl-[protein] + ATP = O-phospho-L-threonyl-[protein] + ADP + H(+). Activated by phosphorylation at Thr-175. Its function is as follows. Catalytic subunit of the probable trimeric SNF1-related protein kinase (SnRK) complex, a central regulator of cellular energy homeostasis, which, in response to seemingly unrelated darkness, sugar and stress conditions, activates energy-producing pathways and inhibits energy-consuming processes. May also be involved in the regulation of fatty acid synthesis by phosphorylation of acetyl-CoA carboxylase and in assimilation of nitrogen by phosphorylating nitrate reductase. The chain is SNF1-related protein kinase catalytic subunit alpha KIN12 from Arabidopsis thaliana (Mouse-ear cress).